We begin with the raw amino-acid sequence, 952 residues long: Pentatricopeptide repeat-containing protein At5g04810, chloroplastic (952 aa).

A chloroplast-targeting transit peptide spans 1–60 (MDNGGSVLSLSAPHFPYSATILRRHSPVASISFSLKQPPPQPPEPPESPPDLRRPEKSIG). 2 disordered regions span residues 30 to 95 (SISF…VSPL) and 115 to 163 (LRLS…EFRQ). Residues 37-49 (QPPPQPPEPPESP) are compositionally biased toward pro residues. Residues 58 to 68 (SIGSSSSSSSP) show a composition bias toward low complexity. A compositionally biased stretch (pro residues) spans 122 to 133 (SPPPPPPPPPPV). Positions 137–163 (TQFRDEFRSDTKPPEEETRNPQQEFRQ) are enriched in basic and acidic residues. One can recognise an RRM domain in the interval 167 to 238 (IFVGNLPTWI…VEFHGRILTV (72 aa)). A compositionally biased stretch (basic and acidic residues) spans 259 to 280 (EGEEDTKMSNKSSWHQEREGSR). Residues 259–281 (EGEEDTKMSNKSSWHQEREGSRK) are disordered. PPR repeat units lie at residues 308–342 (SRTE…GITP), 343–377 (TSRI…GIEM), 378–412 (SLVT…HKTL), 413–447 (NASI…GIDA), 448–482 (PIAI…GFTP), 483–517 (TVVT…GVKH), 518–552 (NLKT…GMKP), 553–587 (DVIL…RHRP), 588–622 (TTRT…GCVP), 623–657 (TVHT…GVSA), 658–692 (NEHT…GLDV), 693–727 (DIFT…NIPR), 728–762 (NSFV…GVKP), 763–797 (DIHT…GVKP), and 798–832 (NIKT…GIKP). The interval 918–952 (DQVSDVDSDEDDVDGEDGEDDEDVNSVSDLLSPYK) is disordered. Positions 921–941 (SDVDSDEDDVDGEDGEDDEDV) are enriched in acidic residues.

This sequence belongs to the PPR family. P subfamily.

It is found in the plastid. The protein localises to the chloroplast. Functionally, may play a role in the plastid ribosome biogenesis. The protein is Pentatricopeptide repeat-containing protein At5g04810, chloroplastic (PPR4) of Arabidopsis thaliana (Mouse-ear cress).